We begin with the raw amino-acid sequence, 240 residues long: Phosphatidylserine decarboxylase proenzyme (240 aa).

S198 acts as the Schiff-base intermediate with substrate; via pyruvic acid in catalysis. Position 198 is a pyruvic acid (Ser); by autocatalysis (S198).

This sequence belongs to the phosphatidylserine decarboxylase family. PSD-A subfamily. As to quaternary structure, heterodimer of a large membrane-associated beta subunit and a small pyruvoyl-containing alpha subunit. The cofactor is pyruvate. Is synthesized initially as an inactive proenzyme. Formation of the active enzyme involves a self-maturation process in which the active site pyruvoyl group is generated from an internal serine residue via an autocatalytic post-translational modification. Two non-identical subunits are generated from the proenzyme in this reaction, and the pyruvate is formed at the N-terminus of the alpha chain, which is derived from the carboxyl end of the proenzyme. The post-translation cleavage follows an unusual pathway, termed non-hydrolytic serinolysis, in which the side chain hydroxyl group of the serine supplies its oxygen atom to form the C-terminus of the beta chain, while the remainder of the serine residue undergoes an oxidative deamination to produce ammonia and the pyruvoyl prosthetic group on the alpha chain.

Its subcellular location is the cell membrane. It catalyses the reaction a 1,2-diacyl-sn-glycero-3-phospho-L-serine + H(+) = a 1,2-diacyl-sn-glycero-3-phosphoethanolamine + CO2. The protein operates within phospholipid metabolism; phosphatidylethanolamine biosynthesis; phosphatidylethanolamine from CDP-diacylglycerol: step 2/2. Its function is as follows. Catalyzes the formation of phosphatidylethanolamine (PtdEtn) from phosphatidylserine (PtdSer). The polypeptide is Phosphatidylserine decarboxylase proenzyme (Paramagnetospirillum magneticum (strain ATCC 700264 / AMB-1) (Magnetospirillum magneticum)).